A 380-amino-acid polypeptide reads, in one-letter code: Glycogenin-2 (380 aa).

UDP-binding residues include L10, Y16, and R95. 12 residues coordinate UDP-alpha-D-glucose: L10, Y16, R95, K104, D120, A121, D122, N158, T159, D185, D188, and Q189. Residues D120, A121, and D122 each contribute to the UDP site. A Mn(2+)-binding site is contributed by D120. Mn(2+) is bound at residue D122. O-linked (Glc...) tyrosine glycosylation is found at Y230 and Y232. UDP is bound by residues H249, G252, and K255. H249 provides a ligand contact to Mn(2+). UDP-alpha-D-glucose is bound by residues G252 and K255. Positions 331–355 are disordered; that stretch reads SVDRNASQKSTAEKHDIEKPTSKPQ. Over residues 341-351 the composition is skewed to basic and acidic residues; the sequence is TAEKHDIEKPT. O-linked (Glc...) tyrosine glycosylation occurs at Y367.

This sequence belongs to the glycosyltransferase 8 family. Glycogenin subfamily. As to quaternary structure, interacts with glycogen synthase GSY2. The cofactor is Mn(2+).

Its subcellular location is the cytoplasm. It is found in the vacuole. It catalyses the reaction L-tyrosyl-[glycogenin] + UDP-alpha-D-glucose = alpha-D-glucosyl-L-tyrosyl-[glycogenin] + UDP + H(+). The enzyme catalyses [1,4-alpha-D-glucosyl](n)-L-tyrosyl-[glycogenin] + UDP-alpha-D-glucose = [1,4-alpha-D-glucosyl](n+1)-L-tyrosyl-[glycogenin] + UDP + H(+). Functionally, self-glucosylating initiator of glycogen synthesis. It catalyzes the formation of a short alpha (1,4)-glucosyl chain covalently attached via a glucose 1-O-tyrosyl linkage to internal tyrosine residues and these chains act as primers for the elongation reaction catalyzed by glycogen synthase. Capable of transferring glucosyl residues to unbound acceptors such as free oligoglucans or oligoglucan derivatives. The polypeptide is Glycogenin-2 (Saccharomyces cerevisiae (strain ATCC 204508 / S288c) (Baker's yeast)).